Consider the following 481-residue polypeptide: Palmitoyltransferase PFA4 (481 aa).

The interval 1-22 (MTNQDPDDGAYPSSQSDDDGIE) is disordered. Over 1–66 (MTNQDPDDGA…APLTGRRRTP (66 aa)) the chain is Cytoplasmic. The chain crosses the membrane as a helical span at residues 67 to 87 (LSWTEVIWVSLTLLLIAVLGY). Over 88–108 (SSQLYVMLPYYEKTPSFSPQA) the chain is Lumenal. A helical membrane pass occupies residues 109–129 (LAAVLVPFNLGLLAIYYNYWL). Residues 130 to 223 (CVTTDAGSVP…LANCVGHFNH (94 aa)) lie on the Cytoplasmic side of the membrane. The DHHC domain occupies 181-231 (RYCKTCSAFKPPRSHHCKTCQRCVLRMDHHCPWLANCVGHFNHAHFIRFLF). Catalysis depends on Cys211, which acts as the S-palmitoyl cysteine intermediate. A helical membrane pass occupies residues 224–244 (AHFIRFLFYVDVTCLYHLIMI). Residues 245 to 265 (SCRVLDSFNSYTYWREPCARE) are Lumenal-facing. Residues 266-286 (LVWLVVNYALCIPVILLVGIF) traverse the membrane as a helical segment. The Cytoplasmic portion of the chain corresponds to 287 to 481 (SLYHFYCLAV…EVRPHTPWSV (195 aa)). The interval 370 to 481 (SQYRWPPKDP…EVRPHTPWSV (112 aa)) is disordered. The span at 418–431 (SSPSSSDSHSSLHL) shows a compositional bias: low complexity. Basic and acidic residues-rich tracts occupy residues 441–452 (LPHHFDPPHDPD) and 466–475 (RGSEGYEVRP).

Belongs to the DHHC palmitoyltransferase family. PFA4 subfamily.

It is found in the endoplasmic reticulum membrane. The enzyme catalyses L-cysteinyl-[protein] + hexadecanoyl-CoA = S-hexadecanoyl-L-cysteinyl-[protein] + CoA. Mediates the reversible addition of palmitate to target proteins, thereby regulating their membrane association and biological function. In Mycosarcoma maydis (Corn smut fungus), this protein is Palmitoyltransferase PFA4.